Here is a 138-residue protein sequence, read N- to C-terminus: Basic phospholipase A2 Cll-N6 (138 aa).

The first 16 residues, 1-16 (MRTFWIVAVLLVGVEG), serve as a signal peptide directing secretion. Cystine bridges form between C42-C131, C44-C60, C59-C111, C65-C138, C66-C104, C73-C97, and C91-C102. The Ca(2+) site is built by Y43, G45, and G47. The active site involves H63. D64 contacts Ca(2+). D105 is an active-site residue.

Monomer. Ca(2+) serves as cofactor. Expressed by the venom gland.

It localises to the secreted. It catalyses the reaction a 1,2-diacyl-sn-glycero-3-phosphocholine + H2O = a 1-acyl-sn-glycero-3-phosphocholine + a fatty acid + H(+). Snake venom phospholipase A2 (PLA2) that shows myotoxic activities. PLA2 catalyzes the calcium-dependent hydrolysis of the 2-acyl groups in 3-sn-phosphoglycerides. This chain is Basic phospholipase A2 Cll-N6, found in Crotalus lepidus lepidus (Mottled rock rattlesnake).